The sequence spans 78 residues: Conotoxin ArMKLT2-0313 (78 aa).

A signal peptide spans 1–22 (MKLTCVLIIAVLCLTVCQLITA). Residues 23–47 (DYLRDKQKYRSVRLRDGMLNFKGSR) constitute a propeptide that is removed on maturation. Gln-48 is subject to Pyrrolidone carboxylic acid. 3 disulfide bridges follow: Cys-49–Cys-62, Cys-56–Cys-67, and Cys-61–Cys-75.

This sequence belongs to the conotoxin O1 superfamily. Expressed by the venom duct.

The protein resides in the secreted. This is Conotoxin ArMKLT2-0313 from Conus arenatus (Sand-dusted cone).